The sequence spans 73 residues: Alternative prion protein (73 aa).

A helical membrane pass occupies residues 32–52; sequence WWWLGAASWWWLGAAPWWWLG.

Detected in brain homogenate, primary neurons, and peripheral blood mononuclear cells (at protein level).

The protein resides in the mitochondrion outer membrane. The chain is Alternative prion protein (PRNP) from Homo sapiens (Human).